The sequence spans 455 residues: MFLAWERLCTLSCRPKFLKTVWASKILGLSTSAKMSLRFKNAKRIEGLDSNIWIEFTKLAADPSVVNLGQGLPDISPPVYVKEELSKIAAIDNLNQYTRGFGHPSLVKALSCLYEKFYHNKINPNEEILVTVGAYGSLFNAIQGLIDEGDEVIVIVPFFDCYESMVRMAGATPVFVPLRCKPVDGKKCSSSDWTLDPQELASKFNSKTKAIILNTPHNPLGKVYTKEELQVIADLCIKYDTLCISDEVYEWLVYTGNKHFKIATFPGMWERTITIGSAGKTFSVTGWKLGWSIGPKHLIKHLQTVQQNTVYTCATPLQEALAQAFWIDIKRMDDPECYFNSLPKELEVKRDRMVHLLESVGLKSIVPDGGYFIIADVSLLDVDLLDMKDSNEPYDYKFVKWMIKNKKLSAIPVSAFCNAETKSQFEKFVRFCFIKKDSTLDAAEEIIKAWSRQNS.

G71 contacts substrate. Position 116 is an N6-acetyllysine; alternate (K116). N6-succinyllysine; alternate is present on K116. N218 provides a ligand contact to substrate. K280 bears the N6-(pyridoxal phosphate)lysine mark. R430 provides a ligand contact to substrate.

The protein belongs to the class-I pyridoxal-phosphate-dependent aminotransferase family. Homodimer. Pyridoxal 5'-phosphate serves as cofactor.

It catalyses the reaction L-kynurenine + 2-oxoglutarate = kynurenate + L-glutamate + H2O. It carries out the reaction L-kynurenine + glyoxylate = kynurenate + glycine + H2O. The catalysed reaction is 3-hydroxy-L-kynurenine + glyoxylate = xanthurenate + glycine + H2O. The enzyme catalyses an S-substituted L-cysteine + H2O = a thiol + pyruvate + NH4(+). The protein operates within amino-acid degradation; L-kynurenine degradation; kynurenate from L-kynurenine: step 1/2. Its function is as follows. Catalyzes the irreversible transamination of the L-tryptophan metabolite L-kynurenine to form kynurenic acid (KA), an intermediate in the tryptophan catabolic pathway which is also a broad spectrum antagonist of the three ionotropic excitatory amino acid receptors among others. May catalyze the beta-elimination of S-conjugates and Se-conjugates of L-(seleno)cysteine, resulting in the cleavage of the C-S or C-Se bond. Has transaminase activity towards L-kynurenine, tryptophan, phenylalanine, serine, cysteine, methionine, histidine, glutamine and asparagine with glyoxylate as an amino group acceptor (in vitro). Has lower activity with 2-oxoglutarate as amino group acceptor (in vitro). The sequence is that of Kynurenine--oxoglutarate transaminase 3 from Bos taurus (Bovine).